The chain runs to 518 residues: Glutamate--cysteine ligase (518 aa).

It belongs to the glutamate--cysteine ligase type 1 family. Type 1 subfamily.

The catalysed reaction is L-cysteine + L-glutamate + ATP = gamma-L-glutamyl-L-cysteine + ADP + phosphate + H(+). Its pathway is sulfur metabolism; glutathione biosynthesis; glutathione from L-cysteine and L-glutamate: step 1/2. The chain is Glutamate--cysteine ligase from Klebsiella pneumoniae (strain 342).